Consider the following 390-residue polypeptide: ATP phosphoribosyltransferase regulatory subunit (390 aa).

The protein belongs to the class-II aminoacyl-tRNA synthetase family. HisZ subfamily. Heteromultimer composed of HisG and HisZ subunits.

The protein resides in the cytoplasm. Its pathway is amino-acid biosynthesis; L-histidine biosynthesis; L-histidine from 5-phospho-alpha-D-ribose 1-diphosphate: step 1/9. Its function is as follows. Required for the first step of histidine biosynthesis. May allow the feedback regulation of ATP phosphoribosyltransferase activity by histidine. The polypeptide is ATP phosphoribosyltransferase regulatory subunit (Nitrosomonas eutropha (strain DSM 101675 / C91 / Nm57)).